The chain runs to 263 residues: Lysine 5,6-aminomutase beta subunit (263 aa).

A B12-binding domain is found at 120–259 (EVVMVGASTG…TFILKEMVQR (140 aa)). Residues 130–136 (TDAHTVG) and histidine 133 each bind adenosylcob(III)alamin. Lysine 144 bears the N6-(pyridoxal phosphate)lysine mark. Adenosylcob(III)alamin-binding positions include 185 to 192 (LVSQTVTQ), 219 to 223 (IAGGA), and 239 to 244 (FGPGKY).

It belongs to the KamE family. In terms of assembly, heterotetramer of 2 alpha and 2 beta subunits. It depends on adenosylcob(III)alamin as a cofactor. Pyridoxal 5'-phosphate serves as cofactor.

The catalysed reaction is (3S)-3,6-diaminohexanoate = (3S,5S)-3,5-diaminohexanoate. The enzyme catalyses D-lysine = (2R,5S)-2,5-diaminohexanoate. The protein operates within amino-acid degradation; L-lysine degradation via acetate pathway. In terms of biological role, catalyzes the migration of the L-beta-lysine and D-lysine epsilon amino group to the delta carbon to produce 3,5-diaminohexanoate and 2,5-diaminohexanoate, respectively. This chain is Lysine 5,6-aminomutase beta subunit, found in Fusobacterium nucleatum subsp. nucleatum (strain ATCC 25586 / DSM 15643 / BCRC 10681 / CIP 101130 / JCM 8532 / KCTC 2640 / LMG 13131 / VPI 4355).